The following is a 973-amino-acid chain: Leucine--tRNA ligase, chloroplastic/mitochondrial (973 aa).

A 'HIGH' region motif is present at residues 126–135; that stretch reads PSGAGLHVGH. A 'KMSKS' region motif is present at residues 730 to 734; that stretch reads KMSKS. Residue Lys-733 coordinates ATP.

Belongs to the class-I aminoacyl-tRNA synthetase family.

The protein localises to the plastid. It is found in the chloroplast. It localises to the mitochondrion. The enzyme catalyses tRNA(Leu) + L-leucine + ATP = L-leucyl-tRNA(Leu) + AMP + diphosphate. In terms of biological role, catalyzes the specific attachment of an amino acid to its cognate tRNA in a two step reaction: the amino acid (AA) is first activated by ATP to form AA-AMP and then transferred to the acceptor end of the tRNA. The chain is Leucine--tRNA ligase, chloroplastic/mitochondrial from Arabidopsis thaliana (Mouse-ear cress).